The primary structure comprises 284 residues: Agamous-like MADS-box protein AGL49 (284 aa).

The interval 1 to 20 (MAPRQKKPNKSDDDDGDLHR) is disordered. One can recognise an MADS-box domain in the interval 21-66 (KKQSFFKQRFPGFKKKASELSVLCGNSVGFICYGPDNDLHVWPQSQ).

As to quaternary structure, interacts with MEE14/CBP1.

It localises to the nucleus. Its function is as follows. Probable transcription factor that may function in the maintenance of the proper function of the central cell in pollen tube attraction. In Arabidopsis thaliana (Mouse-ear cress), this protein is Agamous-like MADS-box protein AGL49.